The primary structure comprises 662 residues: 72 kDa type IV collagenase (662 aa).

The N-terminal stretch at 1 to 29 (MEALGARGALAGFLRALCVLGCLLGRATA) is a signal peptide. Positions 30-109 (PPSPVIKFPG…PRCGNPDVAN (80 aa)) are cleaved as a propeptide — activation peptide. Residues 100–107 (PRCGNPDV) carry the Cysteine switch motif. Cys102 serves as a coordination point for Zn(2+). The collagenase-like 1 stretch occupies residues 110-221 (YNFFPRKPKW…LWTLGEGQVV (112 aa)). Positions 134 and 168 each coordinate Ca(2+). The Zn(2+) site is built by His178 and Asp180. Residues Asp185 and Gly186 each coordinate Ca(2+). His193 serves as a coordination point for Zn(2+). 3 residues coordinate Ca(2+): Gly200, Gly202, and Asp204. His206 serves as a coordination point for Zn(2+). Positions 208, 209, and 211 each coordinate Ca(2+). The tract at residues 222 to 396 (RVKYGNADGE…WGFCPDQGYS (175 aa)) is collagen-binding. Fibronectin type-II domains lie at 228–276 (ADGE…FCPH), 286–334 (ADGQ…FCPE), and 344–392 (SEGA…FCPD). 6 disulfides stabilise this stretch: Cys233–Cys259, Cys247–Cys274, Cys291–Cys317, Cys305–Cys332, Cys349–Cys375, and Cys363–Cys390. Positions 397 to 467 (LFLVAAHEFG…GPTPTLGPVT (71 aa)) are collagenase-like 2. Position 403 (His403) interacts with Zn(2+). Glu404 is an active-site residue. Zn(2+) contacts are provided by His407 and His413. Residues 414–662 (SQDPGALMAP…GSIKTDWLGC (249 aa)) form a required for inhibitor TIMP2 binding region. A disulfide bond links Cys471 and Cys662. 4 Hemopexin repeats span residues 474-518 (DIVF…WPEL), 519-565 (PEKI…GLPP), 567-615 (VQRV…WNAI), and 616-662 (PDHL…WLGC). Ca(2+) is bound by residues Asp478, Asp523, and Asp571. Residue Asn575 is glycosylated (N-linked (GlcNAc...) asparagine). A Ca(2+)-binding site is contributed by Asp620. The N-linked (GlcNAc...) asparagine glycan is linked to Asn644.

This sequence belongs to the peptidase M10A family. Interacts (via the C-terminal hemopexin-like domains-containing region) with the integrin alpha-V/beta-3; the interaction promotes vascular invasion in angiogenic vessels and melamoma cells. Interacts (via the C-terminal PEX domain) with TIMP2 (via the C-terminal); the interaction inhibits the degradation activity. Interacts with GSK3B. Ca(2+) is required as a cofactor. Requires Zn(2+) as cofactor. Phosphorylation on multiple sites modulates enzymatic activity. Phosphorylated by PKC in vitro. In terms of processing, the propeptide is processed by MMP14 (MT-MMP1) and MMP16 (MT-MMP3). Autocatalytic cleavage in the C-terminal produces the anti-angiogenic peptide, PEX. This processing appears to be facilitated by binding integrinv/beta3.

Its subcellular location is the secreted. It localises to the extracellular space. The protein resides in the extracellular matrix. The protein localises to the membrane. It is found in the nucleus. It catalyses the reaction Cleavage of gelatin type I and collagen types IV, V, VII, X. Cleaves the collagen-like sequence Pro-Gln-Gly-|-Ile-Ala-Gly-Gln.. Its function is as follows. Ubiquitinous metalloproteinase that is involved in diverse functions such as remodeling of the vasculature, angiogenesis, tissue repair, tumor invasion, inflammation, and atherosclerotic plaque rupture. As well as degrading extracellular matrix proteins, can also act on several nonmatrix proteins such as big endothelial 1 and beta-type CGRP promoting vasoconstriction. Also cleaves KISS at a Gly-|-Leu bond. Appears to have a role in myocardial cell death pathways. Contributes to myocardial oxidative stress by regulating the activity of GSK3beta. Cleaves GSK3beta in vitro. Involved in the formation of the fibrovascular tissues. PEX, the C-terminal non-catalytic fragment of MMP2, possesses anti-angiogenic and anti-tumor properties and inhibits cell migration and cell adhesion to FGF2 and vitronectin. Ligand for integrin alpha-v/beta-3 on the surface of blood vessels. The protein is 72 kDa type IV collagenase (MMP2) of Oryctolagus cuniculus (Rabbit).